A 97-amino-acid polypeptide reads, in one-letter code: Large ribosomal subunit protein bL31B (97 aa).

It belongs to the bacterial ribosomal protein bL31 family. Type B subfamily. In terms of assembly, part of the 50S ribosomal subunit.

The polypeptide is Large ribosomal subunit protein bL31B (rpmE2) (Mycolicibacterium paratuberculosis (strain ATCC BAA-968 / K-10) (Mycobacterium paratuberculosis)).